Consider the following 472-residue polypeptide: Homeobox protein PKNOX2 (472 aa).

A disordered region spans residues 1–62; the sequence is MMQHASPAPA…STPVPSAPID (62 aa). Polar residues predominate over residues 26-38; it reads DSPQMTATTQPPS. The span at 46–56 shows a compositional bias: low complexity; that stretch reads SAPSAAASTPV. The MEIS N-terminal domain occupies 96-179; that stretch reads GSECITSASF…MHSDNLLRND (84 aa). Positions 291–350 form a DNA-binding region, homeobox; it reads KRGVLPKHATNIMRSWLFQHLMHPYPTEDEKRQIAAQTNLTLLQVNNWFVNARRRILQPM. Disordered stretches follow at residues 351-371, 386-405, and 423-472; these read LDAS…QHRP, QQQG…LDNL, and AAHD…DSLV. The span at 361 to 371 shows a compositional bias: basic residues; it reads KAKKIKSQHRP. Positions 396 to 405 are enriched in polar residues; it reads PDGSINLDNL. Positions 429–454 are enriched in acidic residues; the sequence is LDGTEEEDEDEMEEEEEEELEEEVDE.

The protein belongs to the TALE/MEIS homeobox family.

Its subcellular location is the nucleus. The polypeptide is Homeobox protein PKNOX2 (PKNOX2) (Pongo abelii (Sumatran orangutan)).